Here is a 240-residue protein sequence, read N- to C-terminus: Molybdate/tungstate import ATP-binding protein WtpC (240 aa).

The region spanning 2 to 227 is the ABC transporter domain; sequence FLKVRAEKRL…KNGEVAEFLS (226 aa). 31–38 contacts ATP; sequence GPTGAGKS.

It belongs to the ABC transporter superfamily. Sulfate/tungstate importer (TC 3.A.1.6) family. The complex is composed of two ATP-binding proteins (WtpC), two transmembrane proteins (WtpB) and a solute-binding protein (WtpA).

The protein resides in the cell membrane. The catalysed reaction is tungstate(in) + ATP + H2O = tungstate(out) + ADP + phosphate + H(+). Part of the ABC transporter complex WtpABC involved in molybdate/tungstate import. Responsible for energy coupling to the transport system. The protein is Molybdate/tungstate import ATP-binding protein WtpC (wtpC) of Archaeoglobus fulgidus (strain ATCC 49558 / DSM 4304 / JCM 9628 / NBRC 100126 / VC-16).